The sequence spans 155 residues: Ribosomal RNA large subunit methyltransferase H (155 aa).

Residues leucine 73, glycine 104, and leucine 123–leucine 128 each bind S-adenosyl-L-methionine.

The protein belongs to the RNA methyltransferase RlmH family. Homodimer.

It is found in the cytoplasm. It catalyses the reaction pseudouridine(1915) in 23S rRNA + S-adenosyl-L-methionine = N(3)-methylpseudouridine(1915) in 23S rRNA + S-adenosyl-L-homocysteine + H(+). Its function is as follows. Specifically methylates the pseudouridine at position 1915 (m3Psi1915) in 23S rRNA. The protein is Ribosomal RNA large subunit methyltransferase H of Ectopseudomonas mendocina (strain ymp) (Pseudomonas mendocina).